The following is a 266-amino-acid chain: Small ribosomal subunit protein uS2 (266 aa).

Residues 233 to 266 (AVREEEFASAPDAGKKGRQAQPKKGKRASDAAAE) form a disordered region. Residues 248-258 (KGRQAQPKKGK) show a composition bias toward basic residues.

The protein belongs to the universal ribosomal protein uS2 family.

The polypeptide is Small ribosomal subunit protein uS2 (Xylella fastidiosa (strain M23)).